Consider the following 176-residue polypeptide: NAD(P)H-quinone oxidoreductase subunit J (176 aa).

Belongs to the complex I 30 kDa subunit family. NDH-1 can be composed of about 15 different subunits; different subcomplexes with different compositions have been identified which probably have different functions.

Its subcellular location is the cellular thylakoid membrane. It catalyses the reaction a plastoquinone + NADH + (n+1) H(+)(in) = a plastoquinol + NAD(+) + n H(+)(out). The enzyme catalyses a plastoquinone + NADPH + (n+1) H(+)(in) = a plastoquinol + NADP(+) + n H(+)(out). In terms of biological role, NDH-1 shuttles electrons from an unknown electron donor, via FMN and iron-sulfur (Fe-S) centers, to quinones in the respiratory and/or the photosynthetic chain. The immediate electron acceptor for the enzyme in this species is believed to be plastoquinone. Couples the redox reaction to proton translocation, and thus conserves the redox energy in a proton gradient. Cyanobacterial NDH-1 also plays a role in inorganic carbon-concentration. This is NAD(P)H-quinone oxidoreductase subunit J from Prochlorococcus marinus subsp. pastoris (strain CCMP1986 / NIES-2087 / MED4).